Reading from the N-terminus, the 218-residue chain is MAFKDTFNKMISYFDTDEVNEVEEDVAASTDNVIPRSQQSVRASSHPKQEPRNNHVQQDHQARSQEQTRSQMHPKHGTSERYYQQSQPKEGHEMVDRRKRMSTSGIANRREQYQQSTCSDQTTIALKYPRKYEDAQEIVDLLIVNECVLIDFQFMLDAQARRCLDFIDGASKVLYGSLQKVGSSMYLLAPSNVSVNIEEMTIPHTTQDIGFDFDMKRR.

A disordered region spans residues 25 to 115 (DVAASTDNVI…IANRREQYQQ (91 aa)). Residues 29-43 (STDNVIPRSQQSVRA) show a composition bias toward polar residues. Residues 47-63 (PKQEPRNNHVQQDHQAR) show a composition bias toward basic and acidic residues.

This sequence belongs to the SepF family. In terms of assembly, homodimer. Interacts with FtsZ.

The protein localises to the cytoplasm. Functionally, cell division protein that is part of the divisome complex and is recruited early to the Z-ring. Probably stimulates Z-ring formation, perhaps through the cross-linking of FtsZ protofilaments. Its function overlaps with FtsA. The protein is Cell division protein SepF of Streptococcus pyogenes serotype M12 (strain MGAS2096).